The chain runs to 88 residues: Small ribosomal subunit protein bS20 (88 aa).

The protein belongs to the bacterial ribosomal protein bS20 family.

Its function is as follows. Binds directly to 16S ribosomal RNA. The protein is Small ribosomal subunit protein bS20 of Mycoplasmopsis synoviae (strain 53) (Mycoplasma synoviae).